A 450-amino-acid polypeptide reads, in one-letter code: UDP-N-acetylmuramoylalanine--D-glutamate ligase (450 aa).

An ATP-binding site is contributed by 119-125 (GSNGKTT).

This sequence belongs to the MurCDEF family.

The protein resides in the cytoplasm. It catalyses the reaction UDP-N-acetyl-alpha-D-muramoyl-L-alanine + D-glutamate + ATP = UDP-N-acetyl-alpha-D-muramoyl-L-alanyl-D-glutamate + ADP + phosphate + H(+). The protein operates within cell wall biogenesis; peptidoglycan biosynthesis. Cell wall formation. Catalyzes the addition of glutamate to the nucleotide precursor UDP-N-acetylmuramoyl-L-alanine (UMA). This Bacillus mycoides (strain KBAB4) (Bacillus weihenstephanensis) protein is UDP-N-acetylmuramoylalanine--D-glutamate ligase.